Here is a 346-residue protein sequence, read N- to C-terminus: Phosphoribosylformylglycinamidine cyclo-ligase (346 aa).

Belongs to the AIR synthase family.

The protein resides in the cytoplasm. It carries out the reaction 2-formamido-N(1)-(5-O-phospho-beta-D-ribosyl)acetamidine + ATP = 5-amino-1-(5-phospho-beta-D-ribosyl)imidazole + ADP + phosphate + H(+). It participates in purine metabolism; IMP biosynthesis via de novo pathway; 5-amino-1-(5-phospho-D-ribosyl)imidazole from N(2)-formyl-N(1)-(5-phospho-D-ribosyl)glycinamide: step 2/2. The chain is Phosphoribosylformylglycinamidine cyclo-ligase from Vibrio campbellii (strain ATCC BAA-1116).